A 62-amino-acid chain; its full sequence is UPF0291 protein CLK_1994 (62 aa).

Belongs to the UPF0291 family.

The protein resides in the cytoplasm. This chain is UPF0291 protein CLK_1994, found in Clostridium botulinum (strain Loch Maree / Type A3).